We begin with the raw amino-acid sequence, 87 residues long: U3-theraphotoxin-Hhn1h (87 aa).

Positions 1–24 are cleaved as a signal peptide; that stretch reads MVNMKASMFLTFAGLVLLFVVCYA. Residues 25-52 constitute a propeptide that is removed on maturation; it reads SESEEKEFPKEMLSSIFAVDNDSKQEER. Disulfide bonds link C54/C67, C61/C72, and C66/C79.

It belongs to the neurotoxin 10 (Hwtx-1) family. 51 (Hntx-8) subfamily. Hntx-8 sub-subfamily. In terms of tissue distribution, expressed by the venom gland.

Its subcellular location is the secreted. In terms of biological role, ion channel inhibitor. The protein is U3-theraphotoxin-Hhn1h of Cyriopagopus hainanus (Chinese bird spider).